The chain runs to 261 residues: 4-hydroxy-tetrahydrodipicolinate reductase (261 aa).

NAD(+) is bound at residue 9-14; it reads GCLGRM. An NADP(+)-binding site is contributed by Arg-36. Residues 97 to 99 and 118 to 121 each bind NAD(+); these read GTT and SANM. The active-site Proton donor/acceptor is the His-151. His-152 provides a ligand contact to (S)-2,3,4,5-tetrahydrodipicolinate. Lys-155 serves as the catalytic Proton donor. 161–162 provides a ligand contact to (S)-2,3,4,5-tetrahydrodipicolinate; that stretch reads GT.

Belongs to the DapB family.

It is found in the cytoplasm. It catalyses the reaction (S)-2,3,4,5-tetrahydrodipicolinate + NAD(+) + H2O = (2S,4S)-4-hydroxy-2,3,4,5-tetrahydrodipicolinate + NADH + H(+). It carries out the reaction (S)-2,3,4,5-tetrahydrodipicolinate + NADP(+) + H2O = (2S,4S)-4-hydroxy-2,3,4,5-tetrahydrodipicolinate + NADPH + H(+). It functions in the pathway amino-acid biosynthesis; L-lysine biosynthesis via DAP pathway; (S)-tetrahydrodipicolinate from L-aspartate: step 4/4. Catalyzes the conversion of 4-hydroxy-tetrahydrodipicolinate (HTPA) to tetrahydrodipicolinate. This Wolbachia sp. subsp. Drosophila simulans (strain wRi) protein is 4-hydroxy-tetrahydrodipicolinate reductase.